The primary structure comprises 269 residues: Shikimate dehydrogenase (NADP(+)) (269 aa).

Residues 17 to 19 and Thr64 contribute to the shikimate site; that span reads SKS. Residue Lys68 is the Proton acceptor of the active site. Glu80 serves as a coordination point for NADP(+). Shikimate-binding residues include Asn89 and Asp105. Residues 130 to 134, 154 to 159, and Met213 each bind NADP(+); these read GAGGA and NRTRAK. Residue Tyr215 participates in shikimate binding. Gly237 lines the NADP(+) pocket.

The protein belongs to the shikimate dehydrogenase family. In terms of assembly, homodimer.

The catalysed reaction is shikimate + NADP(+) = 3-dehydroshikimate + NADPH + H(+). It functions in the pathway metabolic intermediate biosynthesis; chorismate biosynthesis; chorismate from D-erythrose 4-phosphate and phosphoenolpyruvate: step 4/7. Functionally, involved in the biosynthesis of the chorismate, which leads to the biosynthesis of aromatic amino acids. Catalyzes the reversible NADPH linked reduction of 3-dehydroshikimate (DHSA) to yield shikimate (SA). This is Shikimate dehydrogenase (NADP(+)) from Neisseria lactamica.